The following is a 375-amino-acid chain: Transcription factor E2F4 (375 aa).

The DNA-binding element occupies 12 to 81 (SRHEKSLGLL…KNSIQWKGVG (70 aa)). The tract at residues 39-61 (LKAAADTLAVRQKRRIYDITNVL) is leucine-zipper. The DEF box motif lies at 44-81 (DTLAVRQKRRIYDITNVLEGIGLIEKKSKNSIQWKGVG). The segment at 82–177 (PGCNTREIAD…NTNGQKKFQI (96 aa)) is dimerization. Residues 197–300 (SSAPVVVPVP…PDPSTSFQPI (104 aa)) form a disordered region. Residues 220–270 (STPQRPALTPQNDIATSPAPTVPHSTISNAESQDCPTGQTFSMENTTSSRL) are compositionally biased toward polar residues. Residues 280 to 296 (SSASLDNSNDSPDPSTS) are compositionally biased toward low complexity. The transactivation stretch occupies residues 299–375 (PIKSDLSDVL…CDLFDVPINL (77 aa)).

This sequence belongs to the E2F/DP family. As to quaternary structure, component of the drtf1/e2f transcription factor complex. Component of the EDM complex, at least composed of e2f4, e2f5, mcidas and tfdp1.

It localises to the nucleus. In terms of biological role, transcription activator that binds DNA cooperatively with DP proteins through the E2 recognition site, 5'-TTTC[CG]CGC-3' found in the promoter region of a number of genes. Component of the EDM complex, a complex specifically required for multiciliate cell differentiation: the EDM complex binds and activate genes required for centriole biogenesis. Activates genes required for centriole assembly (plk4, cep152) and genes specifically required for motile cilia formation (foxj1). Also promotes the deuterosome pathway of centriole biogenesis by activating expression of deup1, but not its paralog cep63. This chain is Transcription factor E2F4, found in Xenopus laevis (African clawed frog).